A 98-amino-acid chain; its full sequence is MAPRKPSKKVGPQKRPSAEKRVITSKKKQLRNQSFKSKVRTILKKFELAVQSGDVESISAGLRSVYSIADKAVKRGIFKKGKADRVKSRASERACPAA.

Residues 1 to 12 (MAPRKPSKKVGP) are compositionally biased toward basic residues. Positions 1 to 31 (MAPRKPSKKVGPQKRPSAEKRVITSKKKQLR) are disordered.

Belongs to the bacterial ribosomal protein bS20 family.

Functionally, binds directly to 16S ribosomal RNA. In Chlamydia trachomatis serovar L2 (strain ATCC VR-902B / DSM 19102 / 434/Bu), this protein is Small ribosomal subunit protein bS20.